The primary structure comprises 1522 residues: MPGTPQKNKRSASISVSPAKKTEEKEIIQNDSKAILSKQTKRKKKYAFAPINNLNGKNTKVSNASVLKSIAVSQVRNTSRTKDINKAVSKSVKQLPNSQVKPKREMSNLSRHHDFTQDEDGPMEEVIWKYSPLQRDMSDKTTSAAEYSDDYEDVQNPSSTPIVPNRLKTVLSFTNIQVPNADVNQLIQENGNEQVRPKPAEISTRESLRNIDDILDDIEGDLTIKPTITKFSDLPSSPIKAPNVEKKAEVNAEEVDKMDSTGDSNDGDDSLIDILTQKYVEKRKSESQITIQGNTNQKSGAQESCGKNDNTKSRGEIEDHENVDNQAKTGNAFYENEEDSNCQRIKKNEKIEYNSSDEFSDDSLIELLNETQTQVEPNTIEQDLDKVEKMVSDDLRIATDSTLSAYALRAKSGAPRDGVVRLVIVSLRSVELPKIGTQKILECIDGKGEQSSVVVRHPWVYLEFEVGDVIHIIEGKNIENKRLLSDDKNPKTQLANDNLLVLNPDVLFSATSVGSSVGCLRRSILQMQFQDPRGEPSLVMTLGNIVHELLQDSIKYKLSHNKISMEIIIQKLDSLLETYSFSIIICNEEIQYVKELVMKEHAENILYFVNKFVSKSNYGCYTSISGTRRTQPISISNVIDIEENIWSPIYGLKGFLDATVEANVENNKKHIVPLEVKTGKSRSVSYEVQGLIYTLLLNDRYEIPIEFFLLYFTRDKNMTKFPSVLHSIKHILMSRNRMSMNFKHQLQEVFGQAQSRFELPPLLRDSSCDSCFIKESCMVLNKLLEDGTPEESGLVEGEFEILTNHLSQNLANYKEFFTKYNDLITKEESSITCVNKELFLLDGSTRESRSGRCLSGLVVSEVVEHEKTEGAYIYCFSRRRNDNNSQSMLSSQIAANDFVIISDEEGHFCLCQGRVQFINPAKIGISVKRKLLNNRLLDKEKGVTTIQSVVESELEQSSLIATQNLVTYRIDKNDIQQSLSLARFNLLSLFLPAVSPGVDIVDERSKLCRKTKRSDGGNEILRSLLVDNRAPKFRDANDDPVIPYKLSKDTTLNLNQKEAIDKVMRAEDYALILGMPGTGKTTVIAEIIKILVSEGKRVLLTSYTHSAVDNILIKLRNTNISIMRLGMKHKVHPDTQKYVPNYASVKSYNDYLSKINSTSVVATTCLGINDILFTLNEKDFDYVILDEASQISMPVALGPLRYGNRFIMVGDHYQLPPLVKNDAARLGGLEESLFKTFCEKHPESVAELTLQYRMCGDIVTLSNFLIYDNKLKCGNNEVFAQSLELPMPEALSRYRNESANSKQWLEDILEPTRKVVFLNYDNCPDIIEQSEKDNITNHGEAELTLQCVEGMLLSGVPCEDIGVMTLYRAQLRLLKKIFNKNVYDGLEILTADQFQGRDKKCIIISMVRRNSQLNGGALLKELRRVNVAMTRAKSKLIIIGSKSTIGSVPEIKSFVNLLEERNWVYTMCKDALYKYKFPDRSNAIDEARKGCGKRTGAKPITSKSKFVSDKPIIKEILQEYES.

Disordered stretches follow at residues 1 to 29 (MPGT…EIIQ), 77 to 119 (NTSR…TQDE), and 140 to 160 (KTTS…PSST). A Phosphothreonine modification is found at threonine 4. Serine 17 bears the Phosphoserine; by CDK1 mark. Polar residues predominate over residues 91-100 (SVKQLPNSQV). Positions 102–116 (PKREMSNLSRHHDFT) are enriched in basic and acidic residues. Residue serine 237 is modified to Phosphoserine; by CDK1. Disordered stretches follow at residues 239–270 (IKAP…GDDS) and 283–330 (RKSE…AKTG). Residues 243 to 260 (NVEKKAEVNAEEVDKMDS) are compositionally biased toward basic and acidic residues. Residues 287-308 (SQITIQGNTNQKSGAQESCGKN) show a composition bias toward polar residues. Basic and acidic residues predominate over residues 309 to 323 (DNTKSRGEIEDHENV). The interval 450-900 (QSSVVVRHPW…SQIAANDFVI (451 aa)) is nuclease activity. 4 residues coordinate [4Fe-4S] cluster: cysteine 519, cysteine 768, cysteine 771, and cysteine 777. Residues 901–1522 (ISDEEGHFCL…IKEILQEYES (622 aa)) are helicase activity. Phosphothreonine is present on threonine 962. 1074–1081 (GMPGTGKT) serves as a coordination point for ATP.

This sequence belongs to the DNA2/NAM7 helicase family. The cofactor is [4Fe-4S] cluster. Phosphorylated at Ser-17 and Ser-237 by CDK1 in response to DNA damage, leading to promote recruitment to double-strand break (DSB) sites and DNA resection.

The protein localises to the nucleus. It localises to the chromosome. It carries out the reaction ATP + H2O = ADP + phosphate + H(+). Its function is as follows. Key enzyme involved in DNA replication and DNA repair. Involved in Okazaki fragments processing by cleaving long flaps that escape FEN1: flaps that are longer than 27 nucleotides are coated by replication protein A complex (RPA), leading to recruit DNA2 which cleaves the flap until it is too short to bind RPA and becomes a substrate for FEN1. Also involved in 5'-end resection of DNA during double-strand break (DSB) repair by mediating the cleavage of 5'-ssDNA. Possesses different enzymatic activities, such as single-stranded DNA (ssDNA)-dependent ATPase, 5'-3' helicase and endonuclease activities. While the ATPase and endonuclease activities are well-defined and play a key role in Okazaki fragments processing and DSB repair, the 5'-3' DNA helicase activity is atypical: it cannot load onto its tracking strand internally and has an absolute free 5'-end requirement. Helicase activity may promote the motion of DNA2 on the flap, helping the nuclease function. The polypeptide is DNA replication ATP-dependent helicase/nuclease DNA2 (DNA2) (Saccharomyces cerevisiae (strain ATCC 204508 / S288c) (Baker's yeast)).